Reading from the N-terminus, the 273-residue chain is Cell division protein ZipA (273 aa).

M1 is a topological domain (periplasmic). A helical transmembrane segment spans residues 2 to 22 (DIGLREWLIVIGIIVIAGILF). The Cytoplasmic segment spans residues 23–273 (DGWRRMRGGK…ERRQMTIKQR (251 aa)). A disordered region spans residues 61–127 (VVNREHEPSL…DLQERPQKEQ (67 aa)).

It belongs to the ZipA family. In terms of assembly, interacts with FtsZ via their C-terminal domains.

It is found in the cell inner membrane. In terms of biological role, essential cell division protein that stabilizes the FtsZ protofilaments by cross-linking them and that serves as a cytoplasmic membrane anchor for the Z ring. Also required for the recruitment to the septal ring of downstream cell division proteins. The chain is Cell division protein ZipA from Stutzerimonas stutzeri (strain A1501) (Pseudomonas stutzeri).